The following is a 242-amino-acid chain: Segregation and condensation protein A (242 aa).

This sequence belongs to the ScpA family. In terms of assembly, component of a cohesin-like complex composed of ScpA, ScpB and the Smc homodimer, in which ScpA and ScpB bind to the head domain of Smc. The presence of the three proteins is required for the association of the complex with DNA.

It localises to the cytoplasm. In terms of biological role, participates in chromosomal partition during cell division. May act via the formation of a condensin-like complex containing Smc and ScpB that pull DNA away from mid-cell into both cell halves. The protein is Segregation and condensation protein A of Streptococcus pneumoniae (strain Taiwan19F-14).